Here is a 474-residue protein sequence, read N- to C-terminus: Proline--tRNA ligase (474 aa).

Belongs to the class-II aminoacyl-tRNA synthetase family. ProS type 3 subfamily. As to quaternary structure, homodimer.

It localises to the cytoplasm. It catalyses the reaction tRNA(Pro) + L-proline + ATP = L-prolyl-tRNA(Pro) + AMP + diphosphate. Catalyzes the attachment of proline to tRNA(Pro) in a two-step reaction: proline is first activated by ATP to form Pro-AMP and then transferred to the acceptor end of tRNA(Pro). The sequence is that of Proline--tRNA ligase from Mycoplasma mycoides subsp. mycoides SC (strain CCUG 32753 / NCTC 10114 / PG1).